We begin with the raw amino-acid sequence, 34 residues long: Unknown protein 5 (34 aa).

The polypeptide is Unknown protein 5 (Pseudotsuga menziesii (Douglas-fir)).